A 583-amino-acid polypeptide reads, in one-letter code: MADQVKEKTLEETSTWAVAVVCFVLLLISIVIEKLIHKIGSWFKKKNKKALYEALEKVKAELMLMGFISLLLTIGQGYISNICIPKNIAASMHPCSASEEARKYGKKDVPKEDEEENLRRKLLQLVDSLIPRRSLATKGYDKCAEKGKVAFVSAYGMHQLHIFIFVLAVCHVIYCIVTYALGKTKMRRWKKWEEETKTIEYQYSHDPERFRFARDTSFGRRHLSFWSKSTITLWIVCFFRQFFRSVTKVDYLTLRHGFIMAHLAPGSDARFDFRKYIQRSLEEDFKTIVEINPVIWFIAVLFLLTNTNGLNSYLWLPFIPFIVILIVGTKLQVIITKLGLRIQEKGDVVKGTPLVQPGDHFFWFGRPRFILFLIHLVLFTNAFQLAFFVWSTYEFGLKNCFHESRVDVIIRISIGLLVQILCSYVTLPLYALVTQMGSKMKPTVFNERVATALKSWHHTAKKNIKHGRTSESTTPFSSRPTTPTHGSSPIHLLRNAPHKRSRSVDESFANSFSPRNSDFDSWDPESQHETAETSNSNHRSRFGEEESEKKFVSSSVELPPGPGQIRTQHEISTISLRDFSFKR.

The Extracellular portion of the chain corresponds to 1–15 (MADQVKEKTLEETST). The helical transmembrane segment at 16 to 36 (WAVAVVCFVLLLISIVIEKLI) threads the bilayer. Residues 37-61 (HKIGSWFKKKNKKALYEALEKVKAE) lie on the Cytoplasmic side of the membrane. Residues 62-82 (LMLMGFISLLLTIGQGYISNI) traverse the membrane as a helical segment. Residues 83-161 (CIPKNIAASM…VSAYGMHQLH (79 aa)) lie on the Extracellular side of the membrane. A helical transmembrane segment spans residues 162–182 (IFIFVLAVCHVIYCIVTYALG). Topologically, residues 183–284 (KTKMRRWKKW…KYIQRSLEED (102 aa)) are cytoplasmic. The helical transmembrane segment at 285 to 305 (FKTIVEINPVIWFIAVLFLLT) threads the bilayer. At 306 to 314 (NTNGLNSYL) the chain is on the extracellular side. The helical transmembrane segment at 315–335 (WLPFIPFIVILIVGTKLQVII) threads the bilayer. The Cytoplasmic segment spans residues 336–368 (TKLGLRIQEKGDVVKGTPLVQPGDHFFWFGRPR). The chain crosses the membrane as a helical span at residues 369-389 (FILFLIHLVLFTNAFQLAFFV). Over 390–411 (WSTYEFGLKNCFHESRVDVIIR) the chain is Extracellular. The helical transmembrane segment at 412 to 432 (ISIGLLVQILCSYVTLPLYAL) threads the bilayer. Over 433–583 (VTQMGSKMKP…ISLRDFSFKR (151 aa)) the chain is Cytoplasmic. Residues 447–468 (ERVATALKSWHHTAKKNIKHGR) are calmodulin-binding. A disordered region spans residues 461-583 (KKNIKHGRTS…ISLRDFSFKR (123 aa)). Residues 470–484 (SESTTPFSSRPTTPT) show a composition bias toward low complexity. Positions 541 to 551 (RFGEEESEKKF) are enriched in basic and acidic residues.

This sequence belongs to the MLO family.

The protein resides in the membrane. May be involved in modulation of pathogen defense and leaf cell death. Activity seems to be regulated by Ca(2+)-dependent calmodulin binding and seems not to require heterotrimeric G proteins. The protein is MLO-like protein 6 (MLO6) of Arabidopsis thaliana (Mouse-ear cress).